Here is a 149-residue protein sequence, read N- to C-terminus: Protein-export protein SecB 2 (149 aa).

This sequence belongs to the SecB family. In terms of assembly, homotetramer, a dimer of dimers. One homotetramer interacts with 1 SecA dimer.

It is found in the cytoplasm. One of the proteins required for the normal export of preproteins out of the cell cytoplasm. It is a molecular chaperone that binds to a subset of precursor proteins, maintaining them in a translocation-competent state. It also specifically binds to its receptor SecA. The sequence is that of Protein-export protein SecB 2 from Francisella tularensis subsp. tularensis (strain FSC 198).